We begin with the raw amino-acid sequence, 892 residues long: Zinc finger protein 473 homolog (892 aa).

Positions 23–101 (ETLKDLAMDF…TKSSPLQSGF (79 aa)) constitute a KRAB domain. Polar residues-rich tracts occupy residues 66 to 76 (DTSQPSLTSQP) and 84 to 97 (ATST…SSPL). 2 disordered regions span residues 66–97 (DTSQ…SSPL) and 134–203 (GDPE…DSVQ). 2 stretches are compositionally biased toward basic and acidic residues: residues 138 to 156 (SLPR…HQSP) and 190 to 203 (KESR…DSVQ). 2 C2H2-type zinc fingers span residues 209-231 (YKCS…WVLH) and 265-287 (YTCQ…QKIH). Polar residues predominate over residues 297-308 (SDSNLEGLSRSP). A disordered region spans residues 297–370 (SDSNLEGLSR…HPKPLRHQKT (74 aa)). Basic and acidic residues-rich tracts occupy residues 313–323 (GKQRLSKDTDS) and 332–353 (QDQE…ESQP). C2H2-type zinc fingers lie at residues 377 to 399 (FRCK…QRAH), 404 to 426 (YKCA…RKSH), 432 to 454 (CECQ…QAIH), 460 to 482 (YKCD…QRIH), 488 to 510 (HKCS…QRVH), 516 to 538 (HQCP…RLRH), 544 to 566 (FGCA…NKIH), and 572 to 594 (YECK…LSIH). Lys-476 participates in a covalent cross-link: Glycyl lysine isopeptide (Lys-Gly) (interchain with G-Cter in SUMO2). Residue Lys-602 forms a Glycyl lysine isopeptide (Lys-Gly) (interchain with G-Cter in SUMO2) linkage. The C2H2-type 11; degenerate zinc finger occupies 697-719 (FKCDIYNRAFKQRAHLSKHQLIH). 6 consecutive C2H2-type zinc fingers follow at residues 725 to 747 (FKCN…QKTH), 753 to 775 (FECS…QKIH), 781 to 803 (FKCG…QRIH), 809 to 831 (YVCQ…LRIH), 837 to 859 (YTCG…ERIH), and 865 to 887 (YACG…QRIH).

The protein belongs to the krueppel C2H2-type zinc-finger protein family. As to quaternary structure, interacts with the SLBP/pre-mRNA complex but not with SLBP alone. Interacts with LSM11 in a U7 snRNP-dependent manner.

The protein localises to the nucleus. Functionally, involved in histone 3'-end pre-mRNA processing by associating with U7 snRNP and interacting with SLBP/pre-mRNA complex. Increases histone 3'-end pre-mRNA processing but has no effect on U7 snRNP levels, when overexpressed. Required for cell cycle progression from G1 to S phases. The polypeptide is Zinc finger protein 473 homolog (Znf473) (Mus musculus (Mouse)).